Reading from the N-terminus, the 197-residue chain is LexA repressor (197 aa).

Positions 28–47 (VREIARRFRITPRGALLHLI) form a DNA-binding region, H-T-H motif. Active-site for autocatalytic cleavage activity residues include serine 119 and lysine 156.

The protein belongs to the peptidase S24 family. In terms of assembly, homodimer.

The catalysed reaction is Hydrolysis of Ala-|-Gly bond in repressor LexA.. In terms of biological role, represses a number of genes involved in the response to DNA damage (SOS response), including recA and lexA. In the presence of single-stranded DNA, RecA interacts with LexA causing an autocatalytic cleavage which disrupts the DNA-binding part of LexA, leading to derepression of the SOS regulon and eventually DNA repair. This is LexA repressor from Thermotoga sp. (strain RQ2).